The following is a 273-amino-acid chain: 4-hydroxy-tetrahydrodipicolinate reductase (273 aa).

Residues 11-16 (GAGGRM) and Glu-36 each bind NAD(+). Arg-37 contributes to the NADP(+) binding site. Residues 100–102 (GTT) and 124–127 (AANY) contribute to the NAD(+) site. The Proton donor/acceptor role is filled by His-157. His-158 is a (S)-2,3,4,5-tetrahydrodipicolinate binding site. Residue Lys-161 is the Proton donor of the active site. 167-168 (GT) provides a ligand contact to (S)-2,3,4,5-tetrahydrodipicolinate.

The protein belongs to the DapB family.

The protein resides in the cytoplasm. The catalysed reaction is (S)-2,3,4,5-tetrahydrodipicolinate + NAD(+) + H2O = (2S,4S)-4-hydroxy-2,3,4,5-tetrahydrodipicolinate + NADH + H(+). It catalyses the reaction (S)-2,3,4,5-tetrahydrodipicolinate + NADP(+) + H2O = (2S,4S)-4-hydroxy-2,3,4,5-tetrahydrodipicolinate + NADPH + H(+). Its pathway is amino-acid biosynthesis; L-lysine biosynthesis via DAP pathway; (S)-tetrahydrodipicolinate from L-aspartate: step 4/4. Its function is as follows. Catalyzes the conversion of 4-hydroxy-tetrahydrodipicolinate (HTPA) to tetrahydrodipicolinate. This Acinetobacter baylyi (strain ATCC 33305 / BD413 / ADP1) protein is 4-hydroxy-tetrahydrodipicolinate reductase.